The following is a 210-amino-acid chain: Large ribosomal subunit protein uL4 (210 aa).

Positions 46 to 77 are disordered; sequence QGTHKSKERGEIAGSTKKIKKQKGTGTARAGS.

It belongs to the universal ribosomal protein uL4 family. As to quaternary structure, part of the 50S ribosomal subunit.

In terms of biological role, one of the primary rRNA binding proteins, this protein initially binds near the 5'-end of the 23S rRNA. It is important during the early stages of 50S assembly. It makes multiple contacts with different domains of the 23S rRNA in the assembled 50S subunit and ribosome. Its function is as follows. Forms part of the polypeptide exit tunnel. This Amoebophilus asiaticus (strain 5a2) protein is Large ribosomal subunit protein uL4.